Here is a 384-residue protein sequence, read N- to C-terminus: Urea transporter 1 (384 aa).

Residues 1 to 23 form a disordered region; that stretch reads MDDNPTAVKLDQGGNQAPQGQGR. Helical transmembrane passes span 61–81, 85–105, 111–131, 138–158, and 169–189; these read ISQVVFVSNPISGILILVGLL, PWCALNGCVGTVVSTLTALLL, AITAGLQGYNATLVGILMAIY, FWWLLFPVSAMSMTCPIFSSA, and PVFTLPFNMALSMYLSATGHF. A glycan (N-linked (GlcNAc...) asparagine) is linked at N206. The next 3 helical transmembrane spans lie at 237 to 257, 279 to 299, and 327 to 347; these read GGIFLGAILLSSPLMCLHAAI, GLWGFNSSLACIAIGGMFMAL, and VVGLPSCTWPFCLATLLFLLL.

It belongs to the urea transporter family. In terms of assembly, homotrimer; each subunit contains a pore through which urea permeates. Identified in a complex with STOM.

Its subcellular location is the cell membrane. It localises to the basolateral cell membrane. The catalysed reaction is urea(in) = urea(out). In terms of biological role, mediates the transport of urea driven by a concentration gradient across the cell membranes of erythrocytes and the renal inner medullary collecting duct which is critical to the urinary concentrating mechanism. Facilitates water transport in erythrocytes. The sequence is that of Urea transporter 1 (SLC14A1) from Ovis aries (Sheep).